Reading from the N-terminus, the 457-residue chain is Vasoactive intestinal polypeptide receptor 1 (457 aa).

The signal sequence occupies residues 1-30 (MRPPSPLPARWLCVLAGALAWALGPAGGQA). Residues 31–141 (ARLQEECDYV…DEQQTMFYGS (111 aa)) are Extracellular-facing. Cystine bridges form between Cys-37/Cys-208, Cys-50/Cys-72, Cys-63/Cys-105, Cys-86/Cys-122, and Cys-215/Cys-285. N-linked (GlcNAc...) asparagine glycans are attached at residues Asn-58, Asn-69, and Asn-100. Residues 142–166 (VKTGYTIGYGLSLATLLVATAILSL) form a helical membrane-spanning segment. Residues 167 to 174 (FRKLHCTR) are Cytoplasmic-facing. A helical transmembrane segment spans residues 175 to 196 (NYIHMHLFISFILRAAAVFIKD). Over 197–216 (LALFDSGESDQCSEGSVGCK) the chain is Extracellular. Residues 217–241 (AAMVFFQYCVMANFFWLLVEGLYLY) form a helical membrane-spanning segment. Topologically, residues 242–254 (TLLAVSFFSERKY) are cytoplasmic. A helical membrane pass occupies residues 255 to 276 (FWGYILIGWGVPSTFTMVWTIA). The Extracellular segment spans residues 277-291 (RIHFEDYGCWDTINS). An N-linked (GlcNAc...) asparagine glycan is attached at Asn-290. A helical membrane pass occupies residues 292–316 (SLWWIIKGPILTSILVNFILFICII). The Cytoplasmic segment spans residues 317-338 (RILLQKLRPPDIRKSDSSPYSR). A helical membrane pass occupies residues 339-359 (LARSTLLLIPLFGVHYIMFAF). At 360 to 367 (FPDNFKPE) the chain is on the extracellular side. Residues 368-391 (VKMVFELVVGSFQGFVVAILYCFL) form a helical membrane-spanning segment. Over 392 to 457 (NGEVQAELRR…SSFQAEVSLV (66 aa)) the chain is Cytoplasmic.

It belongs to the G-protein coupled receptor 2 family. In terms of assembly, interacts with ADCYAP1/PACAP; activated by both PACAP27 and PACAP38 neuropeptides. Interacts with VIP; the interaction results in VIPR1 activation. As to expression, in lung, HT-29 colonic epithelial cells, Raji B-lymphoblasts. Lesser extent in brain, heart, kidney, liver and placenta. Not expressed in CD4+ or CD8+ T-cells. Expressed in the T-cell lines HARRIS, HuT 78, Jurkat and SUP-T1, but not in the T-cell lines Peer, MOLT-4, HSB and YT.

The protein localises to the cell membrane. G protein-coupled receptor activated by the neuropeptides vasoactive intestinal peptide (VIP) and pituitary adenylate cyclase-activating polypeptide (ADCYAP1/PACAP). Binds VIP and both PACAP27 and PACAP38 bioactive peptides with the following order of ligand affinity VIP = PACAP27 &gt; PACAP38. Ligand binding causes a conformation change that triggers signaling via guanine nucleotide-binding proteins (G proteins) and modulates the activity of downstream effectors. Activates cAMP-dependent pathway. This Homo sapiens (Human) protein is Vasoactive intestinal polypeptide receptor 1.